Reading from the N-terminus, the 154-residue chain is 3-hydroxyacyl-[acyl-carrier-protein] dehydratase FabZ (154 aa).

The active site involves His54.

The protein belongs to the thioester dehydratase family. FabZ subfamily.

It localises to the cytoplasm. It carries out the reaction a (3R)-hydroxyacyl-[ACP] = a (2E)-enoyl-[ACP] + H2O. Functionally, involved in unsaturated fatty acids biosynthesis. Catalyzes the dehydration of short chain beta-hydroxyacyl-ACPs and long chain saturated and unsaturated beta-hydroxyacyl-ACPs. The protein is 3-hydroxyacyl-[acyl-carrier-protein] dehydratase FabZ of Shewanella sp. (strain MR-4).